A 157-amino-acid polypeptide reads, in one-letter code: Crossover junction endodeoxyribonuclease RuvC (157 aa).

Residues D7, E66, and D139 contribute to the active site. D7, E66, and D139 together coordinate Mg(2+).

Belongs to the RuvC family. Homodimer which binds Holliday junction (HJ) DNA. The HJ becomes 2-fold symmetrical on binding to RuvC with unstacked arms; it has a different conformation from HJ DNA in complex with RuvA. In the full resolvosome a probable DNA-RuvA(4)-RuvB(12)-RuvC(2) complex forms which resolves the HJ. Requires Mg(2+) as cofactor.

The protein localises to the cytoplasm. The catalysed reaction is Endonucleolytic cleavage at a junction such as a reciprocal single-stranded crossover between two homologous DNA duplexes (Holliday junction).. The RuvA-RuvB-RuvC complex processes Holliday junction (HJ) DNA during genetic recombination and DNA repair. Endonuclease that resolves HJ intermediates. Cleaves cruciform DNA by making single-stranded nicks across the HJ at symmetrical positions within the homologous arms, yielding a 5'-phosphate and a 3'-hydroxyl group; requires a central core of homology in the junction. The consensus cleavage sequence is 5'-(A/T)TT(C/G)-3'. Cleavage occurs on the 3'-side of the TT dinucleotide at the point of strand exchange. HJ branch migration catalyzed by RuvA-RuvB allows RuvC to scan DNA until it finds its consensus sequence, where it cleaves and resolves the cruciform DNA. The chain is Crossover junction endodeoxyribonuclease RuvC from Helicobacter pylori (strain J99 / ATCC 700824) (Campylobacter pylori J99).